Reading from the N-terminus, the 629-residue chain is Filament-like plant protein 2 (629 aa).

2 coiled-coil regions span residues 34–61 (WEKAENEVVELKQKLEDAADKNIVLEDR) and 102–171 (NTGL…LEAE). The disordered stretch occupies residues 186–205 (SSNQSVDSHSDGGRERVEGS). The span at 193 to 203 (SHSDGGRERVE) shows a compositional bias: basic and acidic residues. Positions 270–493 (ELSLMEKLEK…IEEKTMIKRE (224 aa)) form a coiled coil.

This sequence belongs to the FPP family. As to quaternary structure, interacts with WPP/MAF proteins. Binds to COG2; this interaction promotes the association between cortical microtubules and EXO70A1. Accumulates in preferentially xylem cells.

The protein localises to the vesicle. Functionally, ensures, when in complex with FPP3/VETH1 and COG2, the correct secondary cell wall (SCW) deposition pattern by recruiting exocyst components to cortical microtubules in xylem cells during secondary cell wall deposition by recruiting EXO70A1. This Arabidopsis thaliana (Mouse-ear cress) protein is Filament-like plant protein 2.